Reading from the N-terminus, the 447-residue chain is N-succinylarginine dihydrolase (447 aa).

Residues 19 to 28 (AGLSFGNEAS), asparagine 110, and 137 to 138 (HR) each bind substrate. The active site involves glutamate 174. Residue arginine 212 participates in substrate binding. The active site involves histidine 248. Residues aspartate 250 and asparagine 359 each contribute to the substrate site. Cysteine 365 functions as the Nucleophile in the catalytic mechanism.

Belongs to the succinylarginine dihydrolase family. As to quaternary structure, homodimer.

It carries out the reaction N(2)-succinyl-L-arginine + 2 H2O + 2 H(+) = N(2)-succinyl-L-ornithine + 2 NH4(+) + CO2. The protein operates within amino-acid degradation; L-arginine degradation via AST pathway; L-glutamate and succinate from L-arginine: step 2/5. Functionally, catalyzes the hydrolysis of N(2)-succinylarginine into N(2)-succinylornithine, ammonia and CO(2). The chain is N-succinylarginine dihydrolase from Citrobacter koseri (strain ATCC BAA-895 / CDC 4225-83 / SGSC4696).